The primary structure comprises 350 residues: Thymidine kinase (350 aa).

Residue 17-24 (GPFGIGKT) coordinates ATP. The Proton acceptor role is filled by E45. Substrate is bound at residue Q86. Residue R176 participates in ATP binding. Residue R182 participates in substrate binding.

The protein belongs to the herpesviridae thymidine kinase family. In terms of assembly, homodimer.

It carries out the reaction thymidine + ATP = dTMP + ADP + H(+). Functionally, catalyzes the transfer of the gamma-phospho group of ATP to thymidine to generate dTMP in the salvage pathway of pyrimidine synthesis. The dTMP serves as a substrate for DNA polymerase during viral DNA replication. Allows the virus to be reactivated and to grow in non-proliferative cells lacking a high concentration of phosphorylated nucleic acid precursors. In Gallus gallus (Chicken), this protein is Thymidine kinase.